The primary structure comprises 173 residues: Glutamyl-tRNA(Gln) amidotransferase subunit C-1, mitochondrial (173 aa).

The transit peptide at 1-23 directs the protein to the mitochondrion; it reads MIRIPFRLRPPPGRTLHSLVRTF. Residues 51–70 are disordered; the sequence is PSKVPQRPHKSTTTVGQSTP. The span at 61 to 70 shows a compositional bias: polar residues; the sequence is STTTVGQSTP.

This sequence belongs to the GatC family. As to quaternary structure, subunit of the heterotrimeric GatCAB amidotransferase (AdT) complex, composed of A, B and C subunits.

The protein localises to the mitochondrion. The catalysed reaction is L-glutamyl-tRNA(Gln) + L-glutamine + ATP + H2O = L-glutaminyl-tRNA(Gln) + L-glutamate + ADP + phosphate + H(+). Its function is as follows. Allows the formation of correctly charged Gln-tRNA(Gln) through the transamidation of misacylated Glu-tRNA(Gln) in the mitochondria. The reaction takes place in the presence of glutamine and ATP through an activated gamma-phospho-Glu-tRNA(Gln). The sequence is that of Glutamyl-tRNA(Gln) amidotransferase subunit C-1, mitochondrial from Culex quinquefasciatus (Southern house mosquito).